The primary structure comprises 247 residues: Chymase (247 aa).

The N-terminal stretch at 1 to 19 is a signal peptide; sequence MLLLPLPLLLLFLCSRAEA. The propeptide at 20 to 21 is activation peptide; the sequence is GE. In terms of domain architecture, Peptidase S1 spans 22–245; it reads IIGGTECKPH…YRPWINKILQ (224 aa). A disulfide bridge connects residues Cys51 and Cys67. Residue His66 is the Charge relay system of the active site. 2 N-linked (GlcNAc...) asparagine glycosylation sites follow: Asn80 and Asn103. Asp110 acts as the Charge relay system in catalysis. 2 disulfide bridges follow: Cys144–Cys209 and Cys175–Cys188. Ser203 serves as the catalytic Charge relay system.

Belongs to the peptidase S1 family. Granzyme subfamily.

The protein resides in the secreted. Its subcellular location is the cytoplasmic granule. It carries out the reaction Preferential cleavage: Phe-|-Xaa &gt; Tyr-|-Xaa &gt; Trp-|-Xaa &gt; Leu-|-Xaa.. Functionally, major secreted protease of mast cells with suspected roles in vasoactive peptide generation, extracellular matrix degradation, and regulation of gland secretion. This chain is Chymase (CMA1), found in Papio hamadryas (Hamadryas baboon).